Here is a 711-residue protein sequence, read N- to C-terminus: Forkhead box protein P1 (711 aa).

Residues 1 to 19 (MMQESGSEAKSNGSTIQNG) show a composition bias toward polar residues. The disordered stretch occupies residues 1-41 (MMQESGSEAKSNGSTIQNGSSGGNHLLECGTLRDTRSNGEA). Ser-115 bears the Phosphoserine mark. Disordered stretches follow at residues 273 to 292 (HTAEETTGSNHSSLDLTSTC) and 305 to 332 (MNPHASTNGQLSVHTPKRESLSHEEHPH). Over residues 305–317 (MNPHASTNGQLSV) the composition is skewed to polar residues. Over residues 320 to 332 (PKRESLSHEEHPH) the composition is skewed to basic and acidic residues. Residue Lys-321 forms a Glycyl lysine isopeptide (Lys-Gly) (interchain with G-Cter in SUMO2) linkage. A C2H2-type zinc finger spans residues 340-365 (GVCKWPGCEAVCDDFPAFLKHLNSEH). The leucine-zipper stretch occupies residues 382–403 (VQQLELQLAKDKERLQAMMTHL). Residues Lys-406 and Lys-411 each participate in a glycyl lysine isopeptide (Lys-Gly) (interchain with G-Cter in SUMO2) cross-link. The interval 416–420 (PLNLV) is CTBP1-binding. A compositionally biased stretch (polar residues) spans 424–437 (TLSKSASEASPQSL). Residues 424–456 (TLSKSASEASPQSLPHTPTTPTAPLTPVTQGPS) form a disordered region. Over residues 438-452 (PHTPTTPTAPLTPVT) the composition is skewed to low complexity. Lys-476 participates in a covalent cross-link: Glycyl lysine isopeptide (Lys-Gly) (interchain with G-Cter in SUMO2). The segment at residues 499-589 (RPPFTYASLI…PQKISGNPSL (91 aa)) is a DNA-binding region (fork-head). Positions 645–711 (EHTNSNESDS…EDEPVNEDME (67 aa)) are disordered. The segment covering 646 to 657 (HTNSNESDSSPG) has biased composition (polar residues). A Phosphothreonine modification is found at Thr-687. Ser-692 is subject to Phosphoserine. Residues 701-711 (YEDEPVNEDME) are compositionally biased toward acidic residues.

As to quaternary structure, forms homodimers and heterodimers with FOXP2 and FOXP4. Dimerization is required for DNA-binding. Self-associates. Interacts with CTBP1. Interacts with NCOR2 and AR. Interacts with FOXP2. Interacts with TBR1. Interacts with AURKA; this interaction facilitates the phosphorylation of FOXP1, which suppresses the expression of FBXL7. Interacts with ZMYM2.

The protein localises to the nucleus. Functionally, transcriptional repressor. Can act with CTBP1 to synergistically repress transcription but CTPBP1 is not essential. Plays an important role in the specification and differentiation of lung epithelium. Acts cooperatively with FOXP4 to regulate lung secretory epithelial cell fate and regeneration by restricting the goblet cell lineage program; the function may involve regulation of AGR2. Essential transcriptional regulator of B-cell development. Involved in regulation of cardiac muscle cell proliferation. Involved in the columnar organization of spinal motor neurons. Promotes the formation of the lateral motor neuron column (LMC) and the preganglionic motor column (PGC) and is required for respective appropriate motor axon projections. The segment-appropriate generation of spinal cord motor columns requires cooperation with other Hox proteins. Can regulate PITX3 promoter activity; may promote midbrain identity in embryonic stem cell-derived dopamine neurons by regulating PITX3. Negatively regulates the differentiation of T follicular helper cells T(FH)s. Involved in maintenance of hair follicle stem cell quiescence; the function probably involves regulation of FGF18. Represses transcription of various pro-apoptotic genes and cooperates with NF-kappa B-signaling in promoting B-cell expansion by inhibition of caspase-dependent apoptosis. Binds to CSF1R promoter elements and is involved in regulation of monocyte differentiation and macrophage functions; repression of CSF1R in monocytes seems to involve NCOR2 as corepressor. Involved in endothelial cell proliferation, tube formation and migration indicative for a role in angiogenesis; the role in neovascularization seems to implicate suppression of SEMA5B. Can negatively regulate androgen receptor signaling. Acts as a transcriptional activator of the FBXL7 promoter; this activity is regulated by AURKA. The polypeptide is Forkhead box protein P1 (Foxp1) (Rattus norvegicus (Rat)).